The chain runs to 274 residues: 2,3,4,5-tetrahydropyridine-2,6-dicarboxylate N-succinyltransferase (274 aa).

Residues arginine 104 and aspartate 141 each coordinate substrate.

This sequence belongs to the transferase hexapeptide repeat family. As to quaternary structure, homotrimer.

It is found in the cytoplasm. The catalysed reaction is (S)-2,3,4,5-tetrahydrodipicolinate + succinyl-CoA + H2O = (S)-2-succinylamino-6-oxoheptanedioate + CoA. It participates in amino-acid biosynthesis; L-lysine biosynthesis via DAP pathway; LL-2,6-diaminopimelate from (S)-tetrahydrodipicolinate (succinylase route): step 1/3. This Edwardsiella ictaluri (strain 93-146) protein is 2,3,4,5-tetrahydropyridine-2,6-dicarboxylate N-succinyltransferase.